The sequence spans 239 residues: 7-cyano-7-deazaguanine synthase (239 aa).

13–23 (FSGGQDSTTCL) contributes to the ATP binding site. Zn(2+) is bound by residues cysteine 192, cysteine 201, cysteine 204, and cysteine 207.

It belongs to the QueC family. The cofactor is Zn(2+).

The catalysed reaction is 7-carboxy-7-deazaguanine + NH4(+) + ATP = 7-cyano-7-deazaguanine + ADP + phosphate + H2O + H(+). It participates in purine metabolism; 7-cyano-7-deazaguanine biosynthesis. Catalyzes the ATP-dependent conversion of 7-carboxy-7-deazaguanine (CDG) to 7-cyano-7-deazaguanine (preQ(0)). This is 7-cyano-7-deazaguanine synthase from Shewanella sp. (strain MR-7).